A 156-amino-acid polypeptide reads, in one-letter code: Ribosomal RNA large subunit methyltransferase H (156 aa).

Residues L72, G104, and 123 to 128 each bind S-adenosyl-L-methionine; that span reads LSEMTL.

The protein belongs to the RNA methyltransferase RlmH family. Homodimer.

It is found in the cytoplasm. The enzyme catalyses pseudouridine(1915) in 23S rRNA + S-adenosyl-L-methionine = N(3)-methylpseudouridine(1915) in 23S rRNA + S-adenosyl-L-homocysteine + H(+). In terms of biological role, specifically methylates the pseudouridine at position 1915 (m3Psi1915) in 23S rRNA. In Syntrophotalea carbinolica (strain DSM 2380 / NBRC 103641 / GraBd1) (Pelobacter carbinolicus), this protein is Ribosomal RNA large subunit methyltransferase H.